Consider the following 469-residue polypeptide: Interstitial collagenase (469 aa).

Residues 1–19 (MFSLLLLLLLLCNTGSHGF) form the signal peptide. Positions 20 to 99 (PAATSETQEQ…PRCGVPDVAE (80 aa)) are cleaved as a propeptide — activation peptide. Phosphoserine is present on S57. The Cysteine switch signature appears at 90–97 (PRCGVPDV). Zn(2+) is bound at residue C92. Residue N120 is glycosylated (N-linked (GlcNAc...) asparagine). Positions 124 and 158 each coordinate Ca(2+). Zn(2+)-binding residues include H168 and D170. Residues D175, G176, G178, and N180 each contribute to the Ca(2+) site. Zn(2+) is bound at residue H183. Ca(2+)-binding residues include G190, G192, and D194. Position 196 (H196) interacts with Zn(2+). Residues D198, E199, and E201 each coordinate Ca(2+). A Zn(2+)-binding site is contributed by H218. E219 is an active-site residue. Zn(2+) is bound by residues H222 and H228. T274 is modified (phosphothreonine). Hemopexin repeat units follow at residues 275–324 (PQVC…WPQV), 325–371 (PNGL…FGFP), 374–422 (VKNI…FPGI), and 423–466 (GNKV…WFNC). A disulfide bridge connects residues C278 and C466. Residues D285 and Q329 each contribute to the Ca(2+) site. Y360 carries the phosphotyrosine; by PKDCC modification. D378 and D427 together coordinate Ca(2+).

This sequence belongs to the peptidase M10A family. Ca(2+) is required as a cofactor. The cofactor is Zn(2+). Post-translationally, undergoes autolytic cleavage to produce a N-terminal fragment having reduced collagenolytic activity. In terms of processing, tyrosine phosphorylated in platelets by PKDCC/VLK.

It is found in the secreted. It localises to the extracellular space. The protein localises to the extracellular matrix. It catalyses the reaction Cleavage of the triple helix of collagen at about three-quarters of the length of the molecule from the N-terminus, at 775-Gly-|-Ile-776 in the alpha1(I) chain. Cleaves synthetic substrates and alpha-macroglobulins at bonds where P1' is a hydrophobic residue.. Its activity is regulated as follows. Can be activated without removal of the activation peptide. Its function is as follows. Cleaves collagens of types I, II, and III at one site in the helical domain. Also cleaves collagens of types VII and X. The protein is Interstitial collagenase (MMP1) of Sus scrofa (Pig).